Reading from the N-terminus, the 92-residue chain is Small ribosomal subunit protein uS19c (92 aa).

It belongs to the universal ribosomal protein uS19 family.

It localises to the plastid. The protein resides in the chloroplast. Its function is as follows. Protein S19 forms a complex with S13 that binds strongly to the 16S ribosomal RNA. In Gracilaria tenuistipitata var. liui (Red alga), this protein is Small ribosomal subunit protein uS19c.